The chain runs to 354 residues: Neuronal growth regulator 1 (354 aa).

The signal sequence occupies residues 1 to 37; the sequence is MDMMLLVQGACCSNQWLAAVLLSLCCLLPSCLPAGQS. Ig-like C2-type domains follow at residues 38–134, 139–221, and 225–313; these read VDFP…VHLT, PKIY…KVVV, and PTIQ…LPLN. Cysteine 60 and cysteine 118 are oxidised to a cystine. 2 N-linked (GlcNAc...) asparagine glycosylation sites follow: asparagine 73 and asparagine 155. Disulfide bonds link cysteine 160–cysteine 203 and cysteine 245–cysteine 297. Position 187 is a phosphotyrosine (tyrosine 187). Residues asparagine 275, asparagine 286, asparagine 294, and asparagine 307 are each glycosylated (N-linked (GlcNAc...) asparagine). Glycine 324 carries GPI-anchor amidated glycine lipidation. Positions 325–354 are cleaved as a propeptide — removed in mature form; the sequence is SADVLFSCWYLVLTLSSFTSIFYLKNAILQ.

It belongs to the immunoglobulin superfamily. IgLON family.

Its subcellular location is the cell membrane. Its function is as follows. May be involved in cell-adhesion. May function as a trans-neural growth-promoting factor in regenerative axon sprouting in the mammalian brain. This is Neuronal growth regulator 1 (NEGR1) from Homo sapiens (Human).